We begin with the raw amino-acid sequence, 224 residues long: uncharacterized protein (224 aa).

N-linked (GlcNAc...) asparagine glycans are attached at residues Asn10, Asn70, and Asn74.

It localises to the endoplasmic reticulum. This is an uncharacterized protein from Saccharomyces cerevisiae (strain ATCC 204508 / S288c) (Baker's yeast).